Reading from the N-terminus, the 379-residue chain is Queuine tRNA-ribosyltransferase (379 aa).

The Proton acceptor role is filled by D94. Substrate-binding positions include 94–98 (DSGGF), D148, Q191, and G218. The segment at 249–255 (GVGSPDA) is RNA binding. The active-site Nucleophile is the D268. An RNA binding; important for wobble base 34 recognition region spans residues 273 to 277 (TRIAR). The Zn(2+) site is built by C306, C308, C311, and H337.

It belongs to the queuine tRNA-ribosyltransferase family. Homodimer. Within each dimer, one monomer is responsible for RNA recognition and catalysis, while the other monomer binds to the replacement base PreQ1. It depends on Zn(2+) as a cofactor.

The enzyme catalyses 7-aminomethyl-7-carbaguanine + guanosine(34) in tRNA = 7-aminomethyl-7-carbaguanosine(34) in tRNA + guanine. Its pathway is tRNA modification; tRNA-queuosine biosynthesis. In terms of biological role, catalyzes the base-exchange of a guanine (G) residue with the queuine precursor 7-aminomethyl-7-deazaguanine (PreQ1) at position 34 (anticodon wobble position) in tRNAs with GU(N) anticodons (tRNA-Asp, -Asn, -His and -Tyr). Catalysis occurs through a double-displacement mechanism. The nucleophile active site attacks the C1' of nucleotide 34 to detach the guanine base from the RNA, forming a covalent enzyme-RNA intermediate. The proton acceptor active site deprotonates the incoming PreQ1, allowing a nucleophilic attack on the C1' of the ribose to form the product. After dissociation, two additional enzymatic reactions on the tRNA convert PreQ1 to queuine (Q), resulting in the hypermodified nucleoside queuosine (7-(((4,5-cis-dihydroxy-2-cyclopenten-1-yl)amino)methyl)-7-deazaguanosine). The protein is Queuine tRNA-ribosyltransferase of Macrococcus caseolyticus (strain JCSC5402) (Macrococcoides caseolyticum).